Here is a 359-residue protein sequence, read N- to C-terminus: Mitochondrial calcium uniporter regulator 1 (359 aa).

Topologically, residues 1-68 are mitochondrial intermembrane; it reads MDCGSVGGQR…ARGGVSRASP (68 aa). The helical transmembrane segment at 69–85 threads the bilayer; it reads LLLLLLVPSPRLAAAAP. Over 86–338 the chain is Mitochondrial matrix; the sequence is RRQLGDWERS…LESHKLDNIK (253 aa). Positions 235–310 form a coiled coil; sequence EKSEFSALRA…VALHAQQDRA (76 aa). A helical membrane pass occupies residues 339–358; the sequence is YLAGSIFTCLTVALGFYRLW. Position 359 (I359) is a topological domain, mitochondrial intermembrane.

The protein belongs to the CCDC90 family. In terms of assembly, interacts (via coiled coil regions) with MCU; the interaction is direct. Interacts with SMDT1/EMRE; the interaction is direct. Interacts with PPIF. In terms of tissue distribution, ubiquitously expressed.

The protein localises to the mitochondrion inner membrane. Key regulator of mitochondrial calcium uniporter (MCU) required for calcium entry into mitochondrion. Plays a direct role in uniporter-mediated calcium uptake via a direct interaction with MCU. Probably involved in the assembly of the membrane components of the uniporter complex (uniplex). This Homo sapiens (Human) protein is Mitochondrial calcium uniporter regulator 1.